Reading from the N-terminus, the 212-residue chain is Protein G1-like7 (212 aa).

Low complexity predominate over residues 1-22 (MDPSGPGPSSAAAGGAPAVAAA). 2 disordered regions span residues 1-34 (MDPS…RYES) and 148-212 (KARG…PSAS). The ALOG domain maps to 31 to 158 (RYESQKRRDW…ARGIPYEKKK (128 aa)). Positions 156-160 (KKKRK) match the Nuclear localization signal motif. Residues 167–182 (PAGVEPSGSSSAAAAA) show a composition bias toward low complexity. Over residues 183-194 (AGGGDAGSGGGA) the composition is skewed to gly residues. The span at 195–212 (AATTTAQPGGSGTAPSAS) shows a compositional bias: low complexity.

It belongs to the plant homeotic and developmental regulators ALOG protein family.

It localises to the nucleus. In terms of biological role, probable transcription regulator that acts as a developmental regulator by promoting cell growth in response to light. This is Protein G1-like7 (G1L7) from Oryza sativa subsp. japonica (Rice).